The following is a 131-amino-acid chain: Large ribosomal subunit protein bL21 (131 aa).

Residues 111–131 form a disordered region; sequence VAAATGTADARRAAHNASAKE.

The protein belongs to the bacterial ribosomal protein bL21 family. In terms of assembly, part of the 50S ribosomal subunit. Contacts protein L20.

In terms of biological role, this protein binds to 23S rRNA in the presence of protein L20. The polypeptide is Large ribosomal subunit protein bL21 (Cereibacter sphaeroides (strain ATCC 17029 / ATH 2.4.9) (Rhodobacter sphaeroides)).